We begin with the raw amino-acid sequence, 478 residues long: uncharacterized protein (478 aa).

Residues 2 to 120 enclose the RCK N-terminal domain; sequence MNMITVIGFG…NIDKIINILE (119 aa).

This is an uncharacterized protein from Methanocaldococcus jannaschii (strain ATCC 43067 / DSM 2661 / JAL-1 / JCM 10045 / NBRC 100440) (Methanococcus jannaschii).